We begin with the raw amino-acid sequence, 235 residues long: Urease accessory protein UreF (235 aa).

The protein belongs to the UreF family. UreD, UreF and UreG form a complex that acts as a GTP-hydrolysis-dependent molecular chaperone, activating the urease apoprotein by helping to assemble the nickel containing metallocenter of UreC. The UreE protein probably delivers the nickel.

Its subcellular location is the cytoplasm. Its function is as follows. Required for maturation of urease via the functional incorporation of the urease nickel metallocenter. The polypeptide is Urease accessory protein UreF (Ureaplasma parvum serovar 3 (strain ATCC 27815 / 27 / NCTC 11736)).